Consider the following 222-residue polypeptide: Myosin regulatory light chain 2 (222 aa).

The tract at residues 1–65 (MADEKKKVKK…RGSRKSKRAG (65 aa)) is disordered. At alanine 2 the chain carries N-acetylalanine. A compositionally biased stretch (low complexity) spans 19–53 (TSETASEAASEAATPAPAATPAPAASATGSKRASG). Phosphoserine occurs at positions 66 and 67. 3 EF-hand domains span residues 75 to 110 (KQIA…VGKI), 147 to 180 (DEDE…FGDK), and 181 to 216 (FTMK…KGEE). Ca(2+) is bound by residues aspartate 88, aspartate 90, aspartate 92, and aspartate 99.

In terms of assembly, myosin is a hexamer of 2 heavy chains and 4 light chains.

The protein is Myosin regulatory light chain 2 (Mlc2) of Drosophila melanogaster (Fruit fly).